We begin with the raw amino-acid sequence, 402 residues long: Transcription regulatory protein OpdE (402 aa).

The next 12 membrane-spanning stretches (helical) occupy residues 22-42, 60-80, 86-106, 108-128, 147-167, 170-190, 220-240, 256-276, 296-316, 318-338, 348-368, and 375-395; these read VLAI…PVSL, GIAI…SVAG, TLLL…ALAP, YFVY…FWSM, ALVN…GAWL, LIGW…ALAW, PGVM…FSLF, AHVS…TLLI, ALIA…VVLL, LWGL…ARVF, LFVA…GLLF, and ATFF…ILTA.

The protein to B.subtilis YwfA.

Its subcellular location is the cell membrane. Its function is as follows. Regulates the expression of oprD which encodes the imipenem-specific porin. The polypeptide is Transcription regulatory protein OpdE (opdE) (Pseudomonas aeruginosa (strain ATCC 15692 / DSM 22644 / CIP 104116 / JCM 14847 / LMG 12228 / 1C / PRS 101 / PAO1)).